The sequence spans 235 residues: Purine nucleoside phosphorylase DeoD-type (235 aa).

His4 serves as a coordination point for a purine D-ribonucleoside. Phosphate is bound by residues Gly20, Arg24, Arg43, and 87–90 (RVGT). A purine D-ribonucleoside contacts are provided by residues 179–181 (EME) and 203–204 (SD). Asp204 acts as the Proton donor in catalysis.

Belongs to the PNP/UDP phosphorylase family. In terms of assembly, homohexamer; trimer of homodimers.

The catalysed reaction is a purine D-ribonucleoside + phosphate = a purine nucleobase + alpha-D-ribose 1-phosphate. It catalyses the reaction a purine 2'-deoxy-D-ribonucleoside + phosphate = a purine nucleobase + 2-deoxy-alpha-D-ribose 1-phosphate. Catalyzes the reversible phosphorolytic breakdown of the N-glycosidic bond in the beta-(deoxy)ribonucleoside molecules, with the formation of the corresponding free purine bases and pentose-1-phosphate. This chain is Purine nucleoside phosphorylase DeoD-type, found in Clostridium perfringens (strain SM101 / Type A).